Here is a 485-residue protein sequence, read N- to C-terminus: Pre-glycoprotein polyprotein GP complex (485 aa).

Gly-2 carries the N-myristoyl glycine; by host lipid modification. Topologically, residues 2–17 (GQFISFMQEIPTFLQE) are extracellular. The chain crosses the membrane as a helical span at residues 18–33 (ALNIALVAVSLIAIIK). Residues 34-58 (GVVNLYKSGLFQFFVFLALAGRSCT) are Cytoplasmic-facing. Residue Cys-57 participates in Zn(2+) binding. The Extracellular portion of the chain corresponds to 59-424 (EEAFKIGLHT…QGKTPLTLVD (366 aa)). 6 cysteine pairs are disulfide-bonded: Cys-92/Cys-226, Cys-135/Cys-164, Cys-207/Cys-213, Cys-271/Cys-284, Cys-293/Cys-302, and Cys-356/Cys-377. Asn-95 and Asn-105 each carry an N-linked (GlcNAc...) asparagine; by host glycan. Residues Asn-166 and Asn-178 are each glycosylated (N-linked (GlcNAc...) asparagine; by host). The segment at 250 to 286 (LKAFFSWSLTDSSGKDTPGGYCLEEWMLVAAKMKCFG) is fusion. Residues 287–355 (NTAVAKCNLN…KIRELMSVPY (69 aa)) form an HR1 region. 4 N-linked (GlcNAc...) asparagine; by host glycosylation sites follow: Asn-357, Asn-365, Asn-382, and Asn-387. The interval 360–423 (KFWYVNHTLS…RQGKTPLTLV (64 aa)) is HR2. The chain crosses the membrane as a helical span at residues 425–445 (ICFWSTVFFTASLFLHLVGIP). The Cytoplasmic segment spans residues 446–485 (THRHIRGEACPLPHRLNSLGGCRCGKYPNLKKPTVWRRGH). Positions 447, 449, 455, 459, 467, 469, and 485 each coordinate Zn(2+).

It belongs to the arenaviridae GPC protein family. As to quaternary structure, interacts with glycoprotein G2. Part of the GP complex (GP-C) together with glycoprotein G1 and glycoprotein G2. The GP-complex interacts with protein Z, which interacts with ribonucleocapsid; these interactions may induce virion budding. In terms of assembly, homotrimer; disulfide-linked. In pre-fusion state, G1 homotrimers bind G2 homotrimers via ionic interactions. Part of the GP complex (GP-C) together with glycoprotein G2 and the stable signal peptide. Interacts with host TFRC. The GP-complex interacts with protein Z, which interacts with ribonucleocapsid; these interactions may induce virion budding. Homotrimer. Interacts with the stable signal peptide. In pre-fusion state, G2 homotrimers bind G1 homotrimers via ionic interactions. Part of the GP complex (GP-C) together with glycoprotein G1 and the stable signal peptide. Acidification in the endosome triggers rearrangements, which ultimately leads to a 6 helix bundle formed by the two heptad repeat domains (HR1 and HR2) in post-fusion state. The GP-complex interacts with protein Z, which interacts with ribonucleocapsid; these interactions may induce virion budding. Post-translationally, specific enzymatic cleavages in vivo yield mature proteins. GP-C polyprotein is cleaved in the endoplasmic reticulum by the host protease MBTPS1. Only cleaved glycoprotein is incorporated into virions. In terms of processing, the SSP remains stably associated with the GP complex following cleavage by signal peptidase and plays crucial roles in the trafficking of GP through the secretory pathway. Myristoylation is necessary for GP2-mediated fusion activity.

Its subcellular location is the virion membrane. The protein localises to the host endoplasmic reticulum membrane. The protein resides in the host Golgi apparatus membrane. It localises to the host cell membrane. Functions as a cleaved signal peptide that is retained as the third component of the GP complex (GP-C). Helps to stabilize the spike complex in its native conformation. The SSP is required for efficient glycoprotein expression, post-translational maturation cleavage of G1 and G2, glycoprotein transport to the cell surface plasma membrane, formation of infectious virus particles, and acid pH-dependent glycoprotein-mediated cell fusion. Its function is as follows. Forms the virion spikes together with glycoprotein G2. The glycoprotein spike trimers are connected to the underlying matrix. Mediates virus attachment to host TFRC. This attachment induces virion internalization predominantly through clathrin-mediated endocytosis. In terms of biological role, forms the virion spikes together with glycoprotein G1. The glycoprotein spike trimers are connected to the underlying matrix. Class I viral fusion protein that directs fusion of viral and host endosomal membranes, leading to delivery of the nucleocapsid into the cytoplasm. Membrane fusion is mediated by irreversible conformational changes induced by acidification. The protein is Pre-glycoprotein polyprotein GP complex of Junin mammarenavirus (JUNV).